The sequence spans 247 residues: Mycofactocin precursor peptide peptidase (247 aa).

Glu38, His40, Asp49, His124, and Glu163 together coordinate a divalent metal cation.

Belongs to the creatininase superfamily. In terms of assembly, homooctamer. It depends on Fe(2+) as a cofactor. Requires Zn(2+) as cofactor.

The enzyme catalyses [mycofactocin precursor peptide]-C-terminal glycyl-N-{5-[(4-hydroxyphenyl)methyl]-4,4-dimethyl-2-oxopyrrolidin-3-yl}acetamide + H2O = [mycofactocin precursor peptide]-C-terminal glycine + 3-amino-5-[(4-hydroxyphenyl)methyl]-4,4-dimethyl-2-pyrrolidin-2-one. Peptidase involved in the biosynthesis of the enzyme cofactor mycofactocin (MFT). Catalyzes cleavage of the MftC-modified MftA peptide to liberate its final two residues, which consist of a cross-linked valine-decarboxylated tyrosine dipeptide (named 3-amino-5-[(4-hydroxyphenyl)methyl]-4,4-dimethyl-2-pyrrolidin-2-one or ADHP). Is required for the in vivo ethanol assimilation in M.smegmatis. The polypeptide is Mycofactocin precursor peptide peptidase (Mycolicibacterium smegmatis (strain ATCC 700084 / mc(2)155) (Mycobacterium smegmatis)).